Consider the following 85-residue polypeptide: Beta-insect depressant toxin Lqh-dprIT3b (85 aa).

A signal peptide spans Met1–Ala21. The LCN-type CS-alpha/beta domain maps to Asp22 to Gly82. Disulfide bonds link Cys31-Cys81, Cys35-Cys56, Cys42-Cys63, and Cys46-Cys65. Gly82 is subject to Glycine amide.

The protein belongs to the long (4 C-C) scorpion toxin superfamily. Sodium channel inhibitor family. Beta subfamily. In terms of tissue distribution, expressed by the venom gland.

It is found in the secreted. Its function is as follows. Depressant insect beta-toxins cause a transient contraction paralysis followed by a slow flaccid paralysis. They bind voltage-independently at site-4 of sodium channels (Nav) and block action potentials, primarily by depolarizing the axonal membrane and suppressing the sodium current. This depressant toxin is active only on insects. It is found in a relatively small amount in the venom, and its activity on insects is 10-fold higher compared to other known depressant toxins. The sequence is that of Beta-insect depressant toxin Lqh-dprIT3b from Leiurus hebraeus (Hebrew deathstalker scorpion).